The chain runs to 637 residues: Neurexin-3-beta (637 aa).

The N-terminal stretch at 1 to 35 (MHLRIHARRSPPRRPAWTLGIWFLFWGCIVSSVWS) is a signal peptide. Topologically, residues 36–562 (SSNVASSSST…EVIRESSSTT (527 aa)) are extracellular. Low complexity predominate over residues 43-52 (SSTSSSPGSH). A disordered region spans residues 43 to 65 (SSTSSSPGSHSQHEHHFHGSKHH). Over residues 55–65 (HEHHFHGSKHH) the composition is skewed to basic residues. The Laminin G-like domain occupies 85–255 (ATYIFGKSGG…NPNIKINGSV (171 aa)). Residues Asp137 and Ile154 each coordinate Ca(2+). Asn184 carries N-linked (GlcNAc...) asparagine glycosylation. Ca(2+) contacts are provided by Ile206 and Asn208. 2 N-linked (GlcNAc...) asparagine glycosylation sites follow: Asn252 and Asn296. The disordered stretch occupies residues 289 to 310 (ATTTTRKNRSTASIQPTSDDLV). Positions 298-310 (STASIQPTSDDLV) are enriched in polar residues. Ser312 is a glycosylation site (O-linked (Xyl...) (heparan sulfate) serine). The helical transmembrane segment at 563 to 583 (GMVVGIVAAAALCILILLYAM) threads the bilayer. Residues 584 to 637 (YKYRNRDEGSYQVDETRNYISNSAQSNGTLMKEKQQSSKSGHKKQKNKDREYYV) are Cytoplasmic-facing. A disordered region spans residues 605–637 (NSAQSNGTLMKEKQQSSKSGHKKQKNKDREYYV).

This sequence belongs to the neurexin family. Weakly interacts with CBLN1 and CBLN2. Very weak binding, if any, to CBLN4. Specific isoforms bind neuroligins NLGN1, NLGN2 and NLGN3. Interacts with CLSTN3. In terms of processing, processed by alpha-secretase leading to the formation of an extracellular soluble protein as well as a C-terminal membrane-embedded fragment (CTF). Proteolysis of these CTFs by gamma-secretase releases intracellular domains (ICDs) and extracellular peptides. O-glycosylated; contains heparan sulfate. Heparan sulfate attachment is required for synapse development by mediating interactions with neuroligins. Expressed in the blood vessel walls (at protein level).

It localises to the presynaptic cell membrane. Its function is as follows. Neuronal cell surface protein that may be involved in cell recognition and cell adhesion. May mediate intracellular signaling. Functions as part of a trans-synaptic complex by binding to cerebellins and postsynaptic GRID1. This interaction helps regulate the activity of NMDA and AMPA receptors at hippocampal synapses without affecting synapse formation. NRXN3B-CBLN2-GRID1 complex transduce presynaptic signals into postsynaptic AMPAR response. This chain is Neurexin-3-beta, found in Homo sapiens (Human).